Here is a 336-residue protein sequence, read N- to C-terminus: Holliday junction branch migration complex subunit RuvB (336 aa).

The tract at residues 1–183 (MATERLVAGN…FGINSRLEFY (183 aa)) is large ATPase domain (RuvB-L). Residues leucine 22, arginine 23, glycine 64, lysine 67, threonine 68, threonine 69, 130–132 (EDF), arginine 173, tyrosine 183, and arginine 220 each bind ATP. Threonine 68 is a Mg(2+) binding site. Positions 184 to 254 (QVAELEEIIR…VAREALELLQ (71 aa)) are small ATPAse domain (RuvB-S). Residues 257-336 (AAGLDSSDRR…LGIKPEDRLF (80 aa)) form a head domain (RuvB-H) region. DNA is bound by residues arginine 312 and arginine 317.

Belongs to the RuvB family. As to quaternary structure, homohexamer. Forms an RuvA(8)-RuvB(12)-Holliday junction (HJ) complex. HJ DNA is sandwiched between 2 RuvA tetramers; dsDNA enters through RuvA and exits via RuvB. An RuvB hexamer assembles on each DNA strand where it exits the tetramer. Each RuvB hexamer is contacted by two RuvA subunits (via domain III) on 2 adjacent RuvB subunits; this complex drives branch migration. In the full resolvosome a probable DNA-RuvA(4)-RuvB(12)-RuvC(2) complex forms which resolves the HJ.

Its subcellular location is the cytoplasm. The catalysed reaction is ATP + H2O = ADP + phosphate + H(+). Functionally, the RuvA-RuvB-RuvC complex processes Holliday junction (HJ) DNA during genetic recombination and DNA repair, while the RuvA-RuvB complex plays an important role in the rescue of blocked DNA replication forks via replication fork reversal (RFR). RuvA specifically binds to HJ cruciform DNA, conferring on it an open structure. The RuvB hexamer acts as an ATP-dependent pump, pulling dsDNA into and through the RuvAB complex. RuvB forms 2 homohexamers on either side of HJ DNA bound by 1 or 2 RuvA tetramers; 4 subunits per hexamer contact DNA at a time. Coordinated motions by a converter formed by DNA-disengaged RuvB subunits stimulates ATP hydrolysis and nucleotide exchange. Immobilization of the converter enables RuvB to convert the ATP-contained energy into a lever motion, pulling 2 nucleotides of DNA out of the RuvA tetramer per ATP hydrolyzed, thus driving DNA branch migration. The RuvB motors rotate together with the DNA substrate, which together with the progressing nucleotide cycle form the mechanistic basis for DNA recombination by continuous HJ branch migration. Branch migration allows RuvC to scan DNA until it finds its consensus sequence, where it cleaves and resolves cruciform DNA. In Moorella thermoacetica (strain ATCC 39073 / JCM 9320), this protein is Holliday junction branch migration complex subunit RuvB.